The sequence spans 526 residues: Dye-decolorizing peroxidase (526 aa).

The first 21 residues, 1-21 (MRKSISTFILLSVLSVGQLVA), serve as a signal peptide directing secretion. Residues 22-63 (ARPRSTNAPPRRRTPQPRRTTSLFINPPALPDLPTVQAVDKL) constitute a propeptide that is removed on maturation. Asn-186 is a glycosylation site (N-linked (GlcNAc...) asparagine). Residue Asp-231 is the Proton acceptor of the active site. Residue Asn-367 is glycosylated (N-linked (GlcNAc...) asparagine). Residue His-376 participates in heme binding. Residues Asn-473 and Asn-484 are each glycosylated (N-linked (GlcNAc...) asparagine).

Belongs to the DyP-type peroxidase family. Heme b serves as cofactor.

The protein localises to the secreted. The catalysed reaction is Reactive Blue 5 + 2 H2O2 = 2,2'-disulfonyl azobenzene + 3-[(4-amino-6-chloro-1,3,5-triazin-2-yl)amino]benzenesulfonate + phthalate + 2 H2O + 2 H(+). The enzyme catalyses 2 a phenolic donor + H2O2 = 2 a phenolic radical donor + 2 H2O. Manganese-independent peroxidase that is able to convert a large number of compounds, but its physiological substrate is not known. In addition to classic peroxidase substrates (e.g. 2,6-dimethoxyphenol), oxidizes dyes such as Reactive Blue 5 and Reactive Black 5. This Mycena epipterygia (Yellow-stemmed mycena) protein is Dye-decolorizing peroxidase.